Here is a 367-residue protein sequence, read N- to C-terminus: NADH-quinone oxidoreductase subunit D (367 aa).

This sequence belongs to the complex I 49 kDa subunit family. As to quaternary structure, NDH-1 is composed of 14 different subunits. Subunits NuoB, C, D, E, F, and G constitute the peripheral sector of the complex.

Its subcellular location is the cell membrane. It carries out the reaction a quinone + NADH + 5 H(+)(in) = a quinol + NAD(+) + 4 H(+)(out). Its function is as follows. NDH-1 shuttles electrons from NADH, via FMN and iron-sulfur (Fe-S) centers, to quinones in the respiratory chain. The immediate electron acceptor for the enzyme in this species is believed to be ubiquinone. Couples the redox reaction to proton translocation (for every two electrons transferred, four hydrogen ions are translocated across the cytoplasmic membrane), and thus conserves the redox energy in a proton gradient. In Dehalococcoides mccartyi (strain CBDB1), this protein is NADH-quinone oxidoreductase subunit D.